The following is a 522-amino-acid chain: MFFFKGVVAVLSFFSAVNAAPFMKPNNGTGKYIPDSYIVLLKRDISHDDFELHKRWASDVHKRDVAKRGISFSGIGHSWATGSFRGYSGVFSRDTIEEIMKHEHVAHVERDQIGTSQGWVTQPKAPNWGLGRLSNSNPGNTDYTYDEGAGGNAVVYVIDSGIDTMHPEFQGRATWGANFIDKNNVDCWGHGTHCAGIIGSVTFGVAKRAAMIAVKVLDCNGQGPYSAFIAGLHWATEHAQKNGHIGRAIINFSLGGDNSPAVNQALEEAQKAGIFVSAAAGNFGSDAGSITPGGARLVCVIGNSDERDYRWTGQGPSNFGARVDIFAPGTDIMSTLPGGGSGVMTGTSMAAPHVAGQAAIQVSISGGGFDLSVACAFFKNSASASVKNPGPNTTNKLLVNGANGTKGPKQDENKPNKPPGQDEQPGQNKPPSQNPPPGQNPPPGQNPPPEQPAPSPPANPGDEPNPDGQPYPGDQPNPGDSGPSWWMPSGGLQPPAWWNRRPSFGGWNRPMWWNRPLSVWKL.

The first 19 residues, 1-19 (MFFFKGVVAVLSFFSAVNA), serve as a signal peptide directing secretion. Residues 20–117 (APFMKPNNGT…VERDQIGTSQ (98 aa)) constitute a propeptide that is removed on maturation. The Inhibitor I9 domain occupies 36–113 (SYIVLLKRDI…HVAHVERDQI (78 aa)). Residues 127–405 (NWGLGRLSNS…KLLVNGANGT (279 aa)) form the Peptidase S8 domain. Catalysis depends on charge relay system residues aspartate 159 and histidine 190. Asparagine 251 carries an N-linked (GlcNAc...) asparagine glycan. The Charge relay system role is filled by serine 348. Over residues 383 to 397 (SASVKNPGPNTTNKL) the composition is skewed to polar residues. The disordered stretch occupies residues 383–515 (SASVKNPGPN…GWNRPMWWNR (133 aa)). N-linked (GlcNAc...) asparagine glycosylation is found at asparagine 392 and asparagine 403. The span at 432–459 (SQNPPPGQNPPPGQNPPPEQPAPSPPAN) shows a compositional bias: pro residues.

The protein belongs to the peptidase S8 family.

Its subcellular location is the secreted. In terms of biological role, secreted subtilisin-like serine protease with keratinolytic activity that contributes to pathogenicity. The polypeptide is Subtilisin-like protease 10 (SUB10) (Trichophyton verrucosum (strain HKI 0517)).